The sequence spans 67 residues: Colostrum trypsin inhibitor (67 aa).

The BPTI/Kunitz inhibitor domain maps to 8–58 (CQLPQARGPCKAALLRYFYNSTSNACEPFTYGGCQGNNBNFETTEMCLRIC). Disulfide bonds link Cys8/Cys58, Cys17/Cys41, and Cys33/Cys54. An N-linked (GlcNAc...) asparagine glycan is attached at Asn27.

It is found in the secreted. This Bos taurus (Bovine) protein is Colostrum trypsin inhibitor.